The following is an 878-amino-acid chain: Phosphoenolpyruvate carboxylase (878 aa).

Residues His-138 and Lys-544 contribute to the active site.

This sequence belongs to the PEPCase type 1 family. It depends on Mg(2+) as a cofactor.

It carries out the reaction oxaloacetate + phosphate = phosphoenolpyruvate + hydrogencarbonate. Its function is as follows. Forms oxaloacetate, a four-carbon dicarboxylic acid source for the tricarboxylic acid cycle. This chain is Phosphoenolpyruvate carboxylase, found in Psychromonas ingrahamii (strain DSM 17664 / CCUG 51855 / 37).